Here is a 209-residue protein sequence, read N- to C-terminus: MTKGILGKKVGMTQIFTESGELIPVTVVEATPNVVLQVKTVETDGYEAIQVGYQDKREVLSNKPAKGHVAKANTAPKRFIKEFKNVELGEYEVGKEIKVDVFQAGDVVDVTGTTKGKGFQGAIKRHGQSRGPMSHGSRYHRRPGSMGPVAPNRVFKNKRLAGRMGGDRVTIQNLEVVKVDVERNVILIKGNIPGAKKSLITIKSAVKAK.

Residues 118-151 are disordered; it reads GFQGAIKRHGQSRGPMSHGSRYHRRPGSMGPVAP.

The protein belongs to the universal ribosomal protein uL3 family. As to quaternary structure, part of the 50S ribosomal subunit. Forms a cluster with proteins L14 and L19.

One of the primary rRNA binding proteins, it binds directly near the 3'-end of the 23S rRNA, where it nucleates assembly of the 50S subunit. The chain is Large ribosomal subunit protein uL3 from Enterococcus faecalis (strain ATCC 700802 / V583).